The following is a 616-amino-acid chain: Replication protein A 70 kDa DNA-binding subunit (616 aa).

M1 carries the N-acetylmethionine modification. Glycyl lysine isopeptide (Lys-Gly) (interchain with G-Cter in ubiquitin) cross-links involve residues K22 and K88. The interval 121-154 (GLGQPQVAPPAPAASPAASSRPQPQNGSSGMGST) is disordered. Over residues 134 to 145 (ASPAASSRPQPQ) the composition is skewed to low complexity. N6-acetyllysine; alternate occurs at positions 163 and 167. Residues K163 and K167 each participate in a glycyl lysine isopeptide (Lys-Gly) (interchain with G-Cter in ubiquitin); alternate cross-link. T180 is subject to Phosphothreonine. K183 is covalently cross-linked (Glycyl lysine isopeptide (Lys-Gly) (interchain with G-Cter in ubiquitin)). At T191 the chain carries Phosphothreonine. A DNA-binding region (OB) is located at residues 197–281 (WTICARVTNK…VKNDYEMTFN (85 aa)). Residues K220 and K244 each participate in a glycyl lysine isopeptide (Lys-Gly) (interchain with G-Cter in ubiquitin) cross-link. K259 is modified (N6-acetyllysine; alternate). Residue K259 forms a Glycyl lysine isopeptide (Lys-Gly) (interchain with G-Cter in ubiquitin); alternate linkage. Residues K267 and K331 each participate in a glycyl lysine isopeptide (Lys-Gly) (interchain with G-Cter in ubiquitin) cross-link. Residue S384 is modified to Phosphoserine. Residues K410 and K431 each participate in a glycyl lysine isopeptide (Lys-Gly) (interchain with G-Cter in ubiquitin) cross-link. A Glycyl lysine isopeptide (Lys-Gly) (interchain with G-Cter in SUMO) cross-link involves residue K449. K458 participates in a covalent cross-link: Glycyl lysine isopeptide (Lys-Gly) (interchain with G-Cter in ubiquitin). The C4-type zinc-finger motif lies at 481-503 (CPTQDCNKKVIDQQNGLYRCEKC). A Glycyl lysine isopeptide (Lys-Gly) (interchain with G-Cter in ubiquitin) cross-link involves residue K553. K577 is covalently cross-linked (Glycyl lysine isopeptide (Lys-Gly) (interchain with G-Cter in SUMO)).

This sequence belongs to the replication factor A protein 1 family. As to quaternary structure, component of the canonical replication protein A complex (RPA), a heterotrimer composed of RPA1, RPA2 and RPA3. Also a component of the aRPA, the alternative replication protein A complex, a trimeric complex similar to the replication protein A complex/RPA but where RPA1 and RPA3 are associated with RPA4 instead of RPA2. The DNA-binding activity may reside exclusively on the RPA1 subunit. Interacts with PRPF19; the PRP19-CDC5L complex is recruited to the sites of DNA repair where it ubiquitinates the replication protein A complex (RPA). Interacts with RIPK1. Interacts with the polymerase alpha subunit POLA1/p180; this interaction stabilizes the replicative complex and reduces the misincorporation rate of DNA polymerase alpha by acting as a fidelity clamp. Interacts with RAD51 and SENP6 to regulate DNA repair. Interacts with HELB; this interaction promotes HELB recruitment to chromatin following DNA damage. Interacts with PRIMPOL; leading to recruit PRIMPOL on chromatin and stimulate its DNA primase activity. Interacts with XPA; the interaction is direct and associates XPA with the RPA complex. Interacts with ETAA1; the interaction is direct and promotes ETAA1 recruitment at stalled replication forks. Interacts with RPA1; this interaction associates HROB with the RPA complex. Interacts (when poly-ADP-ribosylated) with HTATSF1. Interacts with BRIP1/FANCJ via this RPA1 subunit; following DNA damage they colocalize in foci in the nucleus. Post-translationally, DNA damage-induced 'Lys-63'-linked polyubiquitination by PRPF19 mediates ATRIP recruitment to the RPA complex at sites of DNA damage and activation of ATR. Ubiquitinated by RFWD3 at stalled replication forks in response to DNA damage: ubiquitination by RFWD3 does not lead to degradation by the proteasome and promotes removal of the RPA complex from stalled replication forks, promoting homologous recombination. In terms of processing, sumoylated on lysine residues Lys-449 and Lys-577, with Lys-449 being the major site. Sumoylation promotes recruitment of RAD51 to the DNA damage foci to initiate DNA repair through homologous recombination. Desumoylated by SENP6. Poly-ADP-ribosylated by PARP1; promoting recruitment of HTATSF1.

The protein resides in the nucleus. The protein localises to the PML body. Its function is as follows. As part of the heterotrimeric replication protein A complex (RPA/RP-A), binds and stabilizes single-stranded DNA intermediates that form during DNA replication or upon DNA stress. It prevents their reannealing and in parallel, recruits and activates different proteins and complexes involved in DNA metabolism. Thereby, it plays an essential role both in DNA replication and the cellular response to DNA damage. In the cellular response to DNA damage, the RPA complex controls DNA repair and DNA damage checkpoint activation. Through recruitment of ATRIP activates the ATR kinase a master regulator of the DNA damage response. It is required for the recruitment of the DNA double-strand break repair factors RAD51 and RAD52 to chromatin in response to DNA damage. Also recruits to sites of DNA damage proteins like XPA and XPG that are involved in nucleotide excision repair and is required for this mechanism of DNA repair. Also plays a role in base excision repair (BER) probably through interaction with UNG. Also recruits SMARCAL1/HARP, which is involved in replication fork restart, to sites of DNA damage. Plays a role in telomere maintenance. As part of the alternative replication protein A complex, aRPA, binds single-stranded DNA and probably plays a role in DNA repair. Compared to the RPA2-containing, canonical RPA complex, may not support chromosomal DNA replication and cell cycle progression through S-phase. The aRPA may not promote efficient priming by DNA polymerase alpha but could support DNA synthesis by polymerase delta in presence of PCNA and replication factor C (RFC), the dual incision/excision reaction of nucleotide excision repair and RAD51-dependent strand exchange. RPA stimulates 5'-3' helicase activity of the BRIP1/FANCJ. This is Replication protein A 70 kDa DNA-binding subunit (RPA1) from Homo sapiens (Human).